Consider the following 313-residue polypeptide: Olfactory receptor 5H15 (313 aa).

The Extracellular segment spans residues 1-28 (MEEENATLLTEFVLTGFLYQPQWKIPLF). N-linked (GlcNAc...) asparagine glycosylation occurs at Asn5. A helical membrane pass occupies residues 29–49 (LAFLVIYLITIMGNLGLIAVI). Residues 50–56 (WKDPHLH) lie on the Cytoplasmic side of the membrane. The chain crosses the membrane as a helical span at residues 57 to 77 (IPMYLLLGNLAFVDAWISSTV). Residues 78-98 (TPKMLNNFLAKSKMISLSECK) are Extracellular-facing. Cys97 and Cys179 are joined by a disulfide. The chain crosses the membrane as a helical span at residues 99–119 (IQFFSIAIGVTTECFLLATMA). Over 120 to 143 (YDRYVAICKPLLYPAIMTNGLCIR) the chain is Cytoplasmic. The helical transmembrane segment at 144-164 (LLILSYIAGILHALIHEGFLF) threads the bilayer. The Extracellular segment spans residues 165–195 (RLTFCNSNIVHHIYCDTIPLSKISCTDSSIN). A helical membrane pass occupies residues 196 to 216 (FLMVFIFSGSIQVFSIVTILI). Residues 217–240 (SYTFVLFTVLEKKSDKGVRKAFST) lie on the Cytoplasmic side of the membrane. The chain crosses the membrane as a helical span at residues 241–261 (CGAHLFSVCLYYGPLLLMYVG). The Extracellular segment spans residues 262 to 271 (PASPQADGQN). Residues 272-292 (MVEPLFYTVIIPLLNPIIYSL) form a helical membrane-spanning segment. Topologically, residues 293–313 (RNKQVIVSFIKMLKRNVKVSY) are cytoplasmic.

Belongs to the G-protein coupled receptor 1 family.

The protein resides in the cell membrane. Functionally, odorant receptor. This is Olfactory receptor 5H15 (OR5H15) from Homo sapiens (Human).